An 808-amino-acid chain; its full sequence is Tegument protein UL47 homolog (808 aa).

2 disordered regions span residues 1 to 21 and 77 to 266; these read MQMP…RENQ and PNEE…SFGE. Positions 83–92 are enriched in basic and acidic residues; the sequence is DNSRGRDRTR. Positions 133 to 160 are enriched in basic residues; that stretch reads SRARSRRRSSSRRRHRNASMHMHFRGGS. A compositionally biased stretch (polar residues) spans 162 to 171; sequence RSATGSQNLI. Residues 197-214 show a composition bias toward basic residues; the sequence is RSSRVRRRHRRSSRRRGP. Residues 235 to 259 are compositionally biased toward basic and acidic residues; that stretch reads PISDIDQKRLRKNSDTSSRGTRESP.

The protein belongs to the alphaherpesvirinae HHV-1 UL47 family. As to quaternary structure, interacts with US3 kinase. Interacts with UL31 and UL34; these interactions seem important for efficient virion nuclear egress. Interacts with UL41/VHS. Post-translationally, phosphorylated by US3. This phosphorylation is required for proper nuclear localization. In terms of processing, O-glycosylated.

It localises to the virion tegument. The protein localises to the host nucleus. Its subcellular location is the host cytoplasm. Tegument protein that can bind to various RNA transcripts. Plays a role in the attenuation of selective viral and cellular mRNA degradation by modulating the activity of host shutoff RNase UL41/VHS. Also plays a role in the primary envelopment of virions in the perinuclear space, probably by interacting with two nuclear egress proteins UL31 and UL34. Plays an important role in the splicing of glycoprotein/gC transcripts and thereby participates in bird-to-bird viral transmission. The polypeptide is Tegument protein UL47 homolog (MDV060) (Gallus gallus (Chicken)).